Consider the following 346-residue polypeptide: tRNA N6-adenosine threonylcarbamoyltransferase (346 aa).

Fe cation is bound by residues His-111 and His-115. Substrate-binding positions include 134-138, Asp-167, Gly-180, and Asn-279; that span reads LVSGG. Position 307 (Asp-307) interacts with Fe cation.

This sequence belongs to the KAE1 / TsaD family. The cofactor is Fe(2+).

Its subcellular location is the cytoplasm. It carries out the reaction L-threonylcarbamoyladenylate + adenosine(37) in tRNA = N(6)-L-threonylcarbamoyladenosine(37) in tRNA + AMP + H(+). Its function is as follows. Required for the formation of a threonylcarbamoyl group on adenosine at position 37 (t(6)A37) in tRNAs that read codons beginning with adenine. Is involved in the transfer of the threonylcarbamoyl moiety of threonylcarbamoyl-AMP (TC-AMP) to the N6 group of A37, together with TsaE and TsaB. TsaD likely plays a direct catalytic role in this reaction. This Burkholderia vietnamiensis (strain G4 / LMG 22486) (Burkholderia cepacia (strain R1808)) protein is tRNA N6-adenosine threonylcarbamoyltransferase.